The sequence spans 195 residues: Glycerol-3-phosphate acyltransferase (195 aa).

4 consecutive transmembrane segments (helical) span residues Ile2 to Val22, Ala79 to Phe99, Val111 to Leu131, and Thr146 to Leu166.

The protein belongs to the PlsY family. In terms of assembly, probably interacts with PlsX.

It localises to the cell membrane. The catalysed reaction is an acyl phosphate + sn-glycerol 3-phosphate = a 1-acyl-sn-glycero-3-phosphate + phosphate. Its pathway is lipid metabolism; phospholipid metabolism. Functionally, catalyzes the transfer of an acyl group from acyl-phosphate (acyl-PO(4)) to glycerol-3-phosphate (G3P) to form lysophosphatidic acid (LPA). This enzyme utilizes acyl-phosphate as fatty acyl donor, but not acyl-CoA or acyl-ACP. The sequence is that of Glycerol-3-phosphate acyltransferase from Alkaliphilus metalliredigens (strain QYMF).